A 525-amino-acid polypeptide reads, in one-letter code: MLFLSFHAGSWESWCCCCLIPADRPWDRGQHWQLEMADTRSVHETRFEAAVKVIQSLPKNGSFQPTNEMMLKFYSFYKQATEGPCKLSRPGFWDPIGRYKWDAWSSLGDMTKEEAMSAYVEEMKKIIETMPMTEKVEELLRVIGPFYEIVEDKKSGRSSDITSDLDNVLTSTPNAKTVNGKAESSDSGAESEEEEAQEEVKGAEQSDNDKKMMKKSADHKNLEVIVTNGYDKDGFVQDIQNDIHASSSLNGRSTEEVKPIEENLGQTGKSAVCIHQDINDDHVEDVAGIQHLTSDSDSEVYCDSMEQFGQEESLDSFTSNNGPFQYYLGGHSSQPVENSGFCEDVQVPPGNGNIGNMQVVAVEGKGEVKHGGEDGRNNSGAPHREKRGGESDEFSNVRRGRGHRMQYLSEGTKGRQVGSGGDGERWGSDRGSRGSLNEQIALVLMRLQEDMQNVLQRLQKLETLTALQAKSSTTTLQTTPQPTSQRPSWWPFEMSPGVLTFAIIWPFIARWLVYLYYQRRRRKLN.

The 90-residue stretch at 43 to 132 (HETRFEAAVK…MKKIIETMPM (90 aa)) folds into the ACB domain. An acyl-CoA is bound by residues 54-63 (IQSLPKNGSF), 74-78 (YSFYK), Lys100, and Tyr119. The interval 157–216 (RSSDITSDLDNVLTSTPNAKTVNGKAESSDSGAESEEEEAQEEVKGAEQSDNDKKMMKKS) is disordered. The span at 158–177 (SSDITSDLDNVLTSTPNAKT) shows a compositional bias: polar residues. A coiled-coil region spans residues 181 to 210 (KAESSDSGAESEEEEAQEEVKGAEQSDNDK). 7 positions are modified to phosphoserine: Ser184, Ser185, Ser187, Ser191, Ser206, Ser270, and Ser304. The segment covering 198-216 (EEVKGAEQSDNDKKMMKKS) has biased composition (basic and acidic residues). Residues 367-376 (EVKHGGEDGR) are compositionally biased toward basic and acidic residues. The interval 367-433 (EVKHGGEDGR…ERWGSDRGSR (67 aa)) is disordered. Position 419 is a phosphoserine (Ser419). Basic and acidic residues predominate over residues 422–432 (DGERWGSDRGS). The stretch at 438-467 (EQIALVLMRLQEDMQNVLQRLQKLETLTAL) forms a coiled coil. N6-acetyllysine is present on Lys460. A helical transmembrane segment spans residues 489-509 (WWPFEMSPGVLTFAIIWPFIA).

It belongs to the ATG37 family.

Its subcellular location is the peroxisome membrane. Its function is as follows. Acyl-CoA binding protein which acts as the peroxisome receptor for pexophagy but is dispensable for aggrephagy and nonselective autophagy. Binds medium- and long-chain acyl-CoA esters. This Pongo abelii (Sumatran orangutan) protein is Acyl-CoA-binding domain-containing protein 5 (ACBD5).